Reading from the N-terminus, the 204-residue chain is Large ribosomal subunit protein uL4 (204 aa).

The segment at 44–76 (KRQGTQSAKTRSEVRGGGIKPWRQKGTGRARQG) is disordered.

It belongs to the universal ribosomal protein uL4 family. As to quaternary structure, part of the 50S ribosomal subunit.

In terms of biological role, one of the primary rRNA binding proteins, this protein initially binds near the 5'-end of the 23S rRNA. It is important during the early stages of 50S assembly. It makes multiple contacts with different domains of the 23S rRNA in the assembled 50S subunit and ribosome. Its function is as follows. Forms part of the polypeptide exit tunnel. This Clostridium perfringens (strain 13 / Type A) protein is Large ribosomal subunit protein uL4.